Reading from the N-terminus, the 115-residue chain is NADH-ubiquinone oxidoreductase chain 3 (115 aa).

3 helical membrane-spanning segments follow: residues 4-24, 55-75, and 87-107; these read LLVLLVNSILSLLLILIAFWL, FFLVAITFLLFDLEIALLLPL, and MTLTSFILISVLALGLAYEWL.

It belongs to the complex I subunit 3 family. In terms of assembly, core subunit of respiratory chain NADH dehydrogenase (Complex I) which is composed of 45 different subunits. Interacts with TMEM186. Interacts with TMEM242.

It is found in the mitochondrion inner membrane. It carries out the reaction a ubiquinone + NADH + 5 H(+)(in) = a ubiquinol + NAD(+) + 4 H(+)(out). In terms of biological role, core subunit of the mitochondrial membrane respiratory chain NADH dehydrogenase (Complex I) which catalyzes electron transfer from NADH through the respiratory chain, using ubiquinone as an electron acceptor. Essential for the catalytic activity of complex I. The protein is NADH-ubiquinone oxidoreductase chain 3 of Peromyscus eremicus (Cactus mouse).